The primary structure comprises 780 residues: Neutral ceramidase (780 aa).

The Cytoplasmic portion of the chain corresponds to 1-12; that stretch reads MAKRTFSNLETF. The helical; Signal-anchor for type II membrane protein transmembrane segment at 13-33 threads the bilayer; sequence LIFLLVMMSAITVALLSLLFI. Residues 34–780 are Lumenal-facing; it reads TSGTIENHKD…TSPAFEVVTI (747 aa). The disordered stretch occupies residues 47-90; that stretch reads HFFSTTQSPPATQGSTAAQRSTATQHSTATQSSTATQTSPVPLT. Residues 57 to 85 are compositionally biased toward low complexity; sequence ATQGSTAAQRSTATQHSTATQSSTATQTS. O-linked (GalNAc...) threonine glycosylation occurs at Thr-62. A glycan (O-linked (GalNAc...) serine) is linked at Ser-67. O-linked (GalNAc...) threonine glycosylation is found at Thr-68 and Thr-70. Ser-73 is a glycosylation site (O-linked (GalNAc...) serine). 2 O-linked (GalNAc...) threonine glycosylation sites follow: Thr-74 and Thr-76. Ser-78 and Ser-79 each carry an O-linked (GalNAc...) serine glycan. O-linked (GalNAc...) threonine glycosylation is found at Thr-80, Thr-82, and Thr-84. Residue Asn-98 is glycosylated (N-linked (GlcNAc...) asparagine). Leu-134 contributes to the Ca(2+) binding site. Asn-151 carries N-linked (GlcNAc...) asparagine glycosylation. His-194 is a Zn(2+) binding site. Residue Asn-217 is glycosylated (N-linked (GlcNAc...) asparagine). His-303 contacts Zn(2+). N-linked (GlcNAc...) asparagine glycosylation occurs at Asn-308. Ser-354 serves as the catalytic Nucleophile. 2 disulfides stabilise this stretch: Cys-362/Cys-376 and Cys-369/Cys-384. Asn-440 and Asn-468 each carry an N-linked (GlcNAc...) asparagine glycan. Cys-448 and Cys-498 are joined by a disulfide. Glu-540 provides a ligand contact to Zn(2+). A glycan (N-linked (GlcNAc...) asparagine) is linked at Asn-564. Tyr-579 is a Zn(2+) binding site. The Ca(2+) site is built by Asp-712, Ser-714, and Thr-717. The N-linked (GlcNAc...) asparagine glycan is linked to Asn-730. A required for correct folding and localization region spans residues 770–780; that stretch reads GTSPAFEVVTI. Thr-779 carries an O-linked (GalNAc...) threonine glycan.

This sequence belongs to the neutral ceramidase family. Requires Zn(2+) as cofactor. Post-translationally, proteolytic cleavage of the N-terminus removes the signal-anchor and produces a soluble form of the protein. N-glycosylated. Required for enzyme activity. In terms of processing, O-glycosylated. Required to retain it as a type II membrane protein at the cell surface. Post-translationally, phosphorylated. May prevent ubiquitination and subsequent degradation. Ubiquitinated, leading to its degradation by the proteasome. Ubiquitination is triggered by nitric oxide. In terms of tissue distribution, primarily expressed in intestine. Ubiquitously expressed with higher levels in kidney, skeletal muscle and heart. The ubiquitous expression observed for ASAH2 might be an experimental artifact due to the paralog ASAH2B.

It localises to the cell membrane. The protein resides in the membrane raft. Its subcellular location is the membrane. It is found in the caveola. The protein localises to the golgi apparatus membrane. It localises to the mitochondrion. The protein resides in the secreted. Its subcellular location is the extracellular exosome. It carries out the reaction an N-acylsphing-4-enine + H2O = sphing-4-enine + a fatty acid. The enzyme catalyses N-dodecanoylsphing-4-enine + H2O = dodecanoate + sphing-4-enine. The catalysed reaction is N-hexadecanoylsphing-4-enine + H2O = sphing-4-enine + hexadecanoate. It catalyses the reaction N-octanoylsphing-4-enine + H2O = octanoate + sphing-4-enine. It carries out the reaction N-(hexanoyl)sphing-4-enine + H2O = hexanoate + sphing-4-enine. The enzyme catalyses N-octadecanoylsphing-4-enine + H2O = sphing-4-enine + octadecanoate. The catalysed reaction is N-tetradecanoylsphing-4-enine + H2O = tetradecanoate + sphing-4-enine. It catalyses the reaction N-(9Z-octadecenoyl)-sphing-4-enine + H2O = sphing-4-enine + (9Z)-octadecenoate. It carries out the reaction N-(15Z-tetracosenoyl)-sphing-4-enine + H2O = (15Z)-tetracosenoate + sphing-4-enine. The enzyme catalyses sphinganine + hexadecanoate = N-hexadecanoylsphinganine + H2O. The catalysed reaction is N-(octadecanoyl)-sphinganine + H2O = sphinganine + octadecanoate. It participates in lipid metabolism; sphingolipid metabolism. Inhibited by dithiothreitol (DTT) and 2-mercaptoethanol. Activity is mildly stimulated by Ca(2+) and Mg(2+), but is not inhibited by EDTA. Activity is inhibited by millimolar levels of Fe(2+), Zn(2+) and Cu(2+). Inhibited by cholesterol. Plasma membrane ceramidase that hydrolyzes sphingolipid ceramides into sphingosine and free fatty acids at neutral pH. Ceramides, sphingosine, and its phosphorylated form sphingosine-1-phosphate are bioactive lipids that mediate cellular signaling pathways regulating several biological processes including cell proliferation, apoptosis and differentiation. Also catalyzes the reverse reaction allowing the synthesis of ceramides from fatty acids and sphingosine. Together with sphingomyelinase, participates in the production of sphingosine and sphingosine-1-phosphate from the degradation of sphingomyelin, a sphingolipid enriched in the plasma membrane of cells. Also participates in the hydrolysis of ceramides from the extracellular milieu allowing the production of sphingosine-1-phosphate inside and outside cells. This is the case for instance with the digestion of dietary sphingolipids in the intestinal tract. The sequence is that of Neutral ceramidase (ASAH2) from Homo sapiens (Human).